A 458-amino-acid chain; its full sequence is F-box/WD repeat-containing protein 9 (458 aa).

At M1 the chain carries N-acetylmethionine. The tract at residues 1-28 (MELPPGPRDDPHAWDDDSDPELEPDTDA) is disordered. Residues 16–28 (DDSDPELEPDTDA) show a composition bias toward acidic residues. A phosphoserine mark is found at S18 and S59. One can recognise an F-box domain in the interval 76–123 (VPGLLSLPPELLLEICAYLDARLVLHVLPRVCHALRDLVRDRVTWRLR). 7 WD repeats span residues 171–210 (GHFA…VEPS), 224–261 (THKG…QQFG), 264–301 (KGKA…ALLK), 305–342 (LHSS…VLQR), 344–381 (QLDS…FQLV), 387–424 (GHRS…RTIC), and 427–458 (SHHN…RLQA).

As to quaternary structure, interacts with SKP1 and CUL1.

Its function is as follows. Substrate-recognition component of the SCF (SKP1-CUL1-F-box protein)-type E3 ubiquitin ligase complex. This is F-box/WD repeat-containing protein 9 (FBXW9) from Bos taurus (Bovine).